We begin with the raw amino-acid sequence, 74 residues long: uncharacterized protein (74 aa).

Residues 20–40 (IYSYTLLTLLVITLICYLIHI) form a helical membrane-spanning segment.

It belongs to the asfivirus KP93L family.

The protein localises to the host membrane. This is an uncharacterized protein from African swine fever virus (isolate Tick/South Africa/Pretoriuskop Pr4/1996) (ASFV).